A 102-amino-acid polypeptide reads, in one-letter code: Large ribosomal subunit protein bL21 (102 aa).

It belongs to the bacterial ribosomal protein bL21 family. In terms of assembly, part of the 50S ribosomal subunit. Contacts protein L20.

Its function is as follows. This protein binds to 23S rRNA in the presence of protein L20. This is Large ribosomal subunit protein bL21 from Geobacter metallireducens (strain ATCC 53774 / DSM 7210 / GS-15).